The primary structure comprises 280 residues: Ribosomal RNA small subunit methyltransferase A (280 aa).

S-adenosyl-L-methionine contacts are provided by Asn28, Leu30, Gly55, Glu77, Asp103, and Asn122.

Belongs to the class I-like SAM-binding methyltransferase superfamily. rRNA adenine N(6)-methyltransferase family. RsmA subfamily.

The protein resides in the cytoplasm. The enzyme catalyses adenosine(1518)/adenosine(1519) in 16S rRNA + 4 S-adenosyl-L-methionine = N(6)-dimethyladenosine(1518)/N(6)-dimethyladenosine(1519) in 16S rRNA + 4 S-adenosyl-L-homocysteine + 4 H(+). In terms of biological role, specifically dimethylates two adjacent adenosines (A1518 and A1519) in the loop of a conserved hairpin near the 3'-end of 16S rRNA in the 30S particle. May play a critical role in biogenesis of 30S subunits. This Ruegeria sp. (strain TM1040) (Silicibacter sp.) protein is Ribosomal RNA small subunit methyltransferase A.